Consider the following 142-residue polypeptide: Large ribosomal subunit protein uL11 (142 aa).

The protein belongs to the universal ribosomal protein uL11 family. As to quaternary structure, part of the ribosomal stalk of the 50S ribosomal subunit. Interacts with L10 and the large rRNA to form the base of the stalk. L10 forms an elongated spine to which L12 dimers bind in a sequential fashion forming a multimeric L10(L12)X complex. In terms of processing, one or more lysine residues are methylated.

Functionally, forms part of the ribosomal stalk which helps the ribosome interact with GTP-bound translation factors. In Pseudoalteromonas translucida (strain TAC 125), this protein is Large ribosomal subunit protein uL11.